Reading from the N-terminus, the 154-residue chain is Myoglobin (154 aa).

The 147-residue stretch at glycine 2–lysine 148 folds into the Globin domain. Position 4 is a phosphoserine (serine 4). Histidine 65 is a binding site for nitrite. Position 65 (histidine 65) interacts with O2. Threonine 68 carries the post-translational modification Phosphothreonine. A heme b-binding site is contributed by histidine 94.

It belongs to the globin family. As to quaternary structure, monomeric.

It localises to the cytoplasm. Its subcellular location is the sarcoplasm. It carries out the reaction Fe(III)-heme b-[protein] + nitric oxide + H2O = Fe(II)-heme b-[protein] + nitrite + 2 H(+). The enzyme catalyses H2O2 + AH2 = A + 2 H2O. Functionally, monomeric heme protein which primary function is to store oxygen and facilitate its diffusion within muscle tissues. Reversibly binds oxygen through a pentacoordinated heme iron and enables its timely and efficient release as needed during periods of heightened demand. Depending on the oxidative conditions of tissues and cells, and in addition to its ability to bind oxygen, it also has a nitrite reductase activity whereby it regulates the production of bioactive nitric oxide. Under stress conditions, like hypoxia and anoxia, it also protects cells against reactive oxygen species thanks to its pseudoperoxidase activity. The chain is Myoglobin (MB) from Pan troglodytes (Chimpanzee).